The following is a 368-amino-acid chain: Aminomethyltransferase (368 aa).

It belongs to the GcvT family. The glycine cleavage system is composed of four proteins: P, T, L and H.

The enzyme catalyses N(6)-[(R)-S(8)-aminomethyldihydrolipoyl]-L-lysyl-[protein] + (6S)-5,6,7,8-tetrahydrofolate = N(6)-[(R)-dihydrolipoyl]-L-lysyl-[protein] + (6R)-5,10-methylene-5,6,7,8-tetrahydrofolate + NH4(+). Functionally, the glycine cleavage system catalyzes the degradation of glycine. The chain is Aminomethyltransferase from Thermoanaerobacter pseudethanolicus (strain ATCC 33223 / 39E) (Clostridium thermohydrosulfuricum).